The primary structure comprises 179 residues: Isopentenyl-diphosphate Delta-isomerase (179 aa).

Residues H25 and H31 each contribute to the Mn(2+) site. A Nudix hydrolase domain is found at 29 to 161 (ELHRAITVYI…PEQFTAWFQL (133 aa)). Residue C66 is part of the active site. C66 lines the Mg(2+) pocket. H68 provides a ligand contact to Mn(2+). E86 serves as a coordination point for Mg(2+). Mn(2+) contacts are provided by E111 and E113. Residue E113 is part of the active site.

This sequence belongs to the IPP isomerase type 1 family. In terms of assembly, homodimer. Requires Mg(2+) as cofactor. Mn(2+) serves as cofactor.

It localises to the cytoplasm. It catalyses the reaction isopentenyl diphosphate = dimethylallyl diphosphate. It functions in the pathway isoprenoid biosynthesis; dimethylallyl diphosphate biosynthesis; dimethylallyl diphosphate from isopentenyl diphosphate: step 1/1. In terms of biological role, catalyzes the 1,3-allylic rearrangement of the homoallylic substrate isopentenyl (IPP) to its highly electrophilic allylic isomer, dimethylallyl diphosphate (DMAPP). The polypeptide is Isopentenyl-diphosphate Delta-isomerase (Pectobacterium atrosepticum (strain SCRI 1043 / ATCC BAA-672) (Erwinia carotovora subsp. atroseptica)).